The chain runs to 253 residues: Trypsin delta (253 aa).

A signal peptide spans 1 to 22; sequence MLKFVILLSAVACALGGTVPEG. The propeptide at 23–30 is activation peptide; that stretch reads LLPQLDGR. In terms of domain architecture, Peptidase S1 spans 31 to 253; that stretch reads IVGGSATTIS…ALRSWVISNA (223 aa). Cys-56 and Cys-72 form a disulfide bridge. Active-site charge relay system residues include His-71 and Asp-116. Intrachain disulfides connect Cys-180/Cys-197 and Cys-206/Cys-230. Residue Ser-210 is the Charge relay system of the active site.

This sequence belongs to the peptidase S1 family.

The protein resides in the secreted. The protein localises to the extracellular space. It carries out the reaction Preferential cleavage: Arg-|-Xaa, Lys-|-Xaa.. The sequence is that of Trypsin delta from Drosophila melanogaster (Fruit fly).